The primary structure comprises 63 residues: MPIAQIHILEGRSDEQKETLIREVSEAISRSLDAPLTSVRVIITEMAKGHFGIGGELASKVRR.

Pro2 (proton acceptor; via imino nitrogen) is an active-site residue.

This sequence belongs to the 4-oxalocrotonate tautomerase family. As to quaternary structure, homohexamer.

It carries out the reaction (2Z,4E)-2-hydroxyhexa-2,4-dienedioate = (3E)-2-oxohex-3-enedioate. Its pathway is xenobiotic degradation; toluene degradation. The protein operates within xenobiotic degradation; xylene degradation. Catalyzes the ketonization of 2-hydroxymuconate stereoselectively to yield 2-oxo-3-hexenedioate. This is 2-hydroxymuconate tautomerase (xylH) from Pseudomonas putida (Arthrobacter siderocapsulatus).